Consider the following 202-residue polypeptide: ATP-dependent Clp protease proteolytic subunit (202 aa).

The active-site Nucleophile is the Ser101. His126 is an active-site residue.

It belongs to the peptidase S14 family. As to quaternary structure, component of the chloroplastic Clp protease core complex.

The protein localises to the plastid. It localises to the chloroplast stroma. It carries out the reaction Hydrolysis of proteins to small peptides in the presence of ATP and magnesium. alpha-casein is the usual test substrate. In the absence of ATP, only oligopeptides shorter than five residues are hydrolyzed (such as succinyl-Leu-Tyr-|-NHMec, and Leu-Tyr-Leu-|-Tyr-Trp, in which cleavage of the -Tyr-|-Leu- and -Tyr-|-Trp bonds also occurs).. Functionally, cleaves peptides in various proteins in a process that requires ATP hydrolysis. Has a chymotrypsin-like activity. Plays a major role in the degradation of misfolded proteins. The chain is ATP-dependent Clp protease proteolytic subunit from Acorus gramineus (Dwarf sweet flag).